The chain runs to 93 residues: C-C motif chemokine 3 (93 aa).

An N-terminal signal peptide occupies residues 1 to 24; that stretch reads MKVAVAALAVLLCAMALCSQVFSA. 2 cysteine pairs are disulfide-bonded: Cys-34/Cys-58 and Cys-35/Cys-74.

It belongs to the intercrine beta (chemokine CC) family. Self-associates. Also heterodimer of MIP-1-alpha(4-69) and MIP-1-beta(3-69). Interacts with CCR1.

It localises to the secreted. Its function is as follows. Monokine with inflammatory and chemokinetic properties. Binds to CCR1, CCR4 and CCR5. One of the major HIV-suppressive factors produced by CD8+ T-cells. Recombinant MIP-1-alpha induces a dose-dependent inhibition of different strains of HIV-1, HIV-2, and simian immunodeficiency virus (SIV). This Bos taurus (Bovine) protein is C-C motif chemokine 3 (CCL3).